The primary structure comprises 272 residues: Tryptophan synthase alpha chain (272 aa).

Catalysis depends on proton acceptor residues Glu-49 and Glu-60.

The protein belongs to the TrpA family. As to quaternary structure, tetramer of two alpha and two beta chains.

It catalyses the reaction (1S,2R)-1-C-(indol-3-yl)glycerol 3-phosphate + L-serine = D-glyceraldehyde 3-phosphate + L-tryptophan + H2O. It participates in amino-acid biosynthesis; L-tryptophan biosynthesis; L-tryptophan from chorismate: step 5/5. The alpha subunit is responsible for the aldol cleavage of indoleglycerol phosphate to indole and glyceraldehyde 3-phosphate. The chain is Tryptophan synthase alpha chain from Legionella pneumophila subsp. pneumophila (strain Philadelphia 1 / ATCC 33152 / DSM 7513).